A 141-amino-acid polypeptide reads, in one-letter code: ATP synthase epsilon chain (141 aa).

It belongs to the ATPase epsilon chain family. As to quaternary structure, F-type ATPases have 2 components, CF(1) - the catalytic core - and CF(0) - the membrane proton channel. CF(1) has five subunits: alpha(3), beta(3), gamma(1), delta(1), epsilon(1). CF(0) has three main subunits: a, b and c.

The protein localises to the cell inner membrane. Its function is as follows. Produces ATP from ADP in the presence of a proton gradient across the membrane. In Pseudomonas syringae pv. syringae (strain B728a), this protein is ATP synthase epsilon chain.